Reading from the N-terminus, the 563-residue chain is Serine palmitoyltransferase 3 (563 aa).

Residues 1–29 (MANLNDSAVTNGTLHNPKTQQGKRQSTGC) show a composition bias toward polar residues. The segment at 1 to 32 (MANLNDSAVTNGTLHNPKTQQGKRQSTGCVKN) is disordered. A helical membrane pass occupies residues 59-79 (PLYVYVLTYMGYGIGILFGYL). Position 371 is an N6-(pyridoxal phosphate)lysine (Lys-371).

The protein belongs to the class-II pyridoxal-phosphate-dependent aminotransferase family. In terms of assembly, component of the serine palmitoyltransferase (SPT) complex, which is composed of SPTLC1, SPTLC2 or SPTLC3 and SPTSSA or SPTSSB. The heterodimer consisting of SPTLC1 and SPTLC2/SPTLC3 forms the catalytic core of the enzyme, while SPTSSA or SPTSSB subunits determine substrate specificity. SPT also interacts with ORMDL proteins, especially ORMDL3, which negatively regulate SPT activity in the presence of ceramides. Pyridoxal 5'-phosphate is required as a cofactor. Expressed in white and brown adipose tissues.

It localises to the endoplasmic reticulum membrane. It carries out the reaction L-serine + hexadecanoyl-CoA + H(+) = 3-oxosphinganine + CO2 + CoA. The enzyme catalyses dodecanoyl-CoA + L-serine + H(+) = 3-oxotetradecasphinganine + CO2 + CoA. The catalysed reaction is tetradecanoyl-CoA + L-serine + H(+) = 3-oxohexadecasphinganine + CO2 + CoA. It catalyses the reaction octadecanoyl-CoA + L-serine + H(+) = 3-oxoeicosasphinganine + CO2 + CoA. It participates in lipid metabolism; sphingolipid metabolism. With respect to regulation, SPT complex catalytic activity is negatively regulated by ORMDL proteins, including ORMDL3, in the presence of ceramides. This mechanism allows to maintain ceramide levels at sufficient concentrations for the production of complex sphingolipids, but which prevents the accumulation of ceramides to levels that trigger apoptosis. In terms of biological role, component of the serine palmitoyltransferase multisubunit enzyme (SPT) that catalyzes the initial and rate-limiting step in sphingolipid biosynthesis by condensing L-serine and activated acyl-CoA (most commonly palmitoyl-CoA) to form long-chain bases. The SPT complex is composed of SPTLC1, SPTLC2 or SPTLC3 and SPTSSA or SPTSSB. Within this complex, the heterodimer consisting of SPTLC1 and SPTLC2/SPTLC3 forms the catalytic core. The composition of the serine palmitoyltransferase (SPT) complex determines the substrate preference. The SPTLC1-SPTLC2-SPTSSA complex shows a strong preference for C16-CoA substrate, while the SPTLC1-SPTLC3-SPTSSA isozyme uses both C14-CoA and C16-CoA as substrates, with a slight preference for C14-CoA. The SPTLC1-SPTLC2-SPTSSB complex shows a strong preference for C18-CoA substrate, while the SPTLC1-SPTLC3-SPTSSB isozyme displays an ability to use a broader range of acyl-CoAs, without apparent preference. The sequence is that of Serine palmitoyltransferase 3 from Mus musculus (Mouse).